The primary structure comprises 184 residues: Cytidylate kinase (184 aa).

8–16 (GQPGSGKTT) lines the ATP pocket.

It belongs to the cytidylate kinase family. Type 2 subfamily.

The protein localises to the cytoplasm. The enzyme catalyses CMP + ATP = CDP + ADP. It catalyses the reaction dCMP + ATP = dCDP + ADP. The protein is Cytidylate kinase of Pyrobaculum arsenaticum (strain DSM 13514 / JCM 11321 / PZ6).